Consider the following 129-residue polypeptide: MPTYNQLVRFKRKSKVRKTKSPALEANPFKSGVCLVVKTVTPKKPNSALRKVATVRLSNKRTVNVYIPGEKHSVKEHDRVLVRGGQVPDLPGVKYHVVLGAYDIAGVKGRKQGRSRYGAPRKQVVATKK.

Asp-89 carries the 3-methylthioaspartic acid modification. A disordered region spans residues 110 to 129; the sequence is RKQGRSRYGAPRKQVVATKK.

This sequence belongs to the universal ribosomal protein uS12 family. As to quaternary structure, part of the 30S ribosomal subunit. Contacts proteins S8 and S17. May interact with IF1 in the 30S initiation complex.

Functionally, with S4 and S5 plays an important role in translational accuracy. In terms of biological role, interacts with and stabilizes bases of the 16S rRNA that are involved in tRNA selection in the A site and with the mRNA backbone. Located at the interface of the 30S and 50S subunits, it traverses the body of the 30S subunit contacting proteins on the other side and probably holding the rRNA structure together. The combined cluster of proteins S8, S12 and S17 appears to hold together the shoulder and platform of the 30S subunit. The sequence is that of Small ribosomal subunit protein uS12 from Rickettsia bellii (strain OSU 85-389).